Consider the following 168-residue polypeptide: Small ribosomal subunit protein uS5 (168 aa).

The 64-residue stretch at 17 to 80 folds into the S5 DRBM domain; that stretch reads IEDQLVAVNR…EDGKKKMINV (64 aa).

Belongs to the universal ribosomal protein uS5 family. Part of the 30S ribosomal subunit. Contacts proteins S4 and S8.

In terms of biological role, with S4 and S12 plays an important role in translational accuracy. Functionally, located at the back of the 30S subunit body where it stabilizes the conformation of the head with respect to the body. The protein is Small ribosomal subunit protein uS5 of Lactobacillus acidophilus (strain ATCC 700396 / NCK56 / N2 / NCFM).